We begin with the raw amino-acid sequence, 304 residues long: Acetyl-coenzyme A carboxylase carboxyl transferase subunit beta (304 aa).

Residues 16-42 form a disordered region; it reads SSLPPKNSEGGLAYFDEPSPEQESTRK. The 257-residue stretch at 48-304 folds into the CoA carboxyltransferase N-terminal domain; sequence LWVKCPKCGE…LLRYHQEGAV (257 aa). Cys-52, Cys-55, Cys-71, and Cys-74 together coordinate Zn(2+). The segment at 52–74 adopts a C4-type zinc-finger fold; sequence CPKCGEALFNKDLVENQRVCLTC.

Belongs to the AccD/PCCB family. As to quaternary structure, acetyl-CoA carboxylase is a heterohexamer composed of biotin carboxyl carrier protein (AccB), biotin carboxylase (AccC) and two subunits each of ACCase subunit alpha (AccA) and ACCase subunit beta (AccD). It depends on Zn(2+) as a cofactor.

The protein resides in the cytoplasm. It catalyses the reaction N(6)-carboxybiotinyl-L-lysyl-[protein] + acetyl-CoA = N(6)-biotinyl-L-lysyl-[protein] + malonyl-CoA. Its pathway is lipid metabolism; malonyl-CoA biosynthesis; malonyl-CoA from acetyl-CoA: step 1/1. Functionally, component of the acetyl coenzyme A carboxylase (ACC) complex. Biotin carboxylase (BC) catalyzes the carboxylation of biotin on its carrier protein (BCCP) and then the CO(2) group is transferred by the transcarboxylase to acetyl-CoA to form malonyl-CoA. In Desulfitobacterium hafniense (strain Y51), this protein is Acetyl-coenzyme A carboxylase carboxyl transferase subunit beta.